A 260-amino-acid chain; its full sequence is uncharacterized protein (260 aa).

Belongs to the MG032/MG096/MG288 family.

This is an uncharacterized protein from Mycoplasma pneumoniae (strain ATCC 29342 / M129 / Subtype 1) (Mycoplasmoides pneumoniae).